The sequence spans 454 residues: Guanine deaminase (454 aa).

Positions 82 and 84 each coordinate Zn(2+). Substrate-binding positions include 84–87, 213–214, 240–243, and aspartate 330; these read HASQ, RF, and HISE. Residues histidine 240 and aspartate 330 each coordinate Zn(2+). The residue at position 453 (serine 453) is a Phosphoserine.

The protein belongs to the metallo-dependent hydrolases superfamily. ATZ/TRZ family. Homodimer. It depends on Zn(2+) as a cofactor.

The enzyme catalyses guanine + H2O + H(+) = xanthine + NH4(+). It participates in purine metabolism; guanine degradation; xanthine from guanine: step 1/1. In terms of biological role, catalyzes the hydrolytic deamination of guanine, producing xanthine and ammonia. The polypeptide is Guanine deaminase (GDA) (Pongo abelii (Sumatran orangutan)).